A 218-amino-acid polypeptide reads, in one-letter code: Ribose-5-phosphate isomerase A (218 aa).

Substrate-binding positions include 28 to 31 (TGST), 81 to 84 (DGAD), and 94 to 97 (KGGG). Residue Glu103 is the Proton acceptor of the active site. Position 121 (Lys121) interacts with substrate.

The protein belongs to the ribose 5-phosphate isomerase family. As to quaternary structure, homodimer.

The enzyme catalyses aldehydo-D-ribose 5-phosphate = D-ribulose 5-phosphate. Its pathway is carbohydrate degradation; pentose phosphate pathway; D-ribose 5-phosphate from D-ribulose 5-phosphate (non-oxidative stage): step 1/1. Catalyzes the reversible conversion of ribose-5-phosphate to ribulose 5-phosphate. The polypeptide is Ribose-5-phosphate isomerase A (Sodalis glossinidius (strain morsitans)).